Consider the following 250-residue polypeptide: 3alpha-hydroxysteroid dehydrogenase (250 aa).

Positions 93, 158, and 162 each coordinate NADP(+). Y158 (proton acceptor) is an active-site residue.

The protein belongs to the short-chain dehydrogenases/reductases (SDR) family.

The catalysed reaction is lithocholate + NADP(+) = 3-oxo-5beta-cholan-24-oate + NADPH + H(+). It carries out the reaction deoxycholate + NADP(+) = 12alpha-hydroxy-3-oxo-5beta-cholan-24-oate + NADPH + H(+). It catalyses the reaction deoxycholate + NAD(+) = 12alpha-hydroxy-3-oxo-5beta-cholan-24-oate + NADH + H(+). The enzyme catalyses cholate + NADP(+) = 7alpha,12alpha-dihydroxy-3-oxo-5beta-cholan-24-oate + NADPH + H(+). The catalysed reaction is chenodeoxycholate + NADP(+) = 3-oxochenodeoxycholate + NADPH + H(+). Its function is as follows. Involved in the modification of secondary bile acids into iso-bile acids (3beta-bile acids) via epimerization of the 3-OH group through a 3-oxo-intermediate. Catalyzes the oxidation of deoxycholate (DCA) and lithocholate (LCA) to yield 12-alpha-hydroxy-3-oxo-5-beta-cholan-24-oate (3-oxo-DCA) and 3-oxo-5-beta-cholan-24-oate (3-oxo-LCA), respectively. Is also able to catalyze the oxidation of cholate (CA) and chenodeoxycholate (CDCA) into 3-dehydrocholate (3-oxo-CA) and 7-alpha-hydroxy-3-oxo-5-beta-cholan-24-oate (3-oxo-CDCA), respectively. Can also catalyze the reverse reactions in vitro. Accepts both NADPH and NADH as cosubstrates. The conversion of the abundant bile acid DCA into isoDCA by the gut bacterium R.gnavus favors the growth of the keystone commensal genus Bacteroides, since isoDCA is less cytotoxic than its parent compound, DCA; iso-bile acids have thus a potential role in modulating gut community composition. The chain is 3alpha-hydroxysteroid dehydrogenase from Mediterraneibacter gnavus (strain ATCC 29149 / DSM 114966 / JCM 6515 / VPI C7-9) (Ruminococcus gnavus).